The chain runs to 243 residues: Putative glycerophosphodiester phosphodiesterase YhdW (243 aa).

Residues 1–238 (MYIIAHRGAS…DYPDFIIKDG (238 aa)) form the GP-PDE domain. H6 serves as the catalytic Proton acceptor. Ca(2+)-binding residues include E33 and D35. The Proton donor role is filled by H48. A Ca(2+)-binding site is contributed by E107.

This sequence belongs to the glycerophosphoryl diester phosphodiesterase family. It depends on Ca(2+) as a cofactor.

It carries out the reaction a sn-glycero-3-phosphodiester + H2O = an alcohol + sn-glycerol 3-phosphate + H(+). Glycerophosphodiester phosphodiesterase hydrolyzes glycerophosphodiesters into glycerol-3-phosphate (G3P) and the corresponding alcohol. The protein is Putative glycerophosphodiester phosphodiesterase YhdW (yhdW) of Bacillus subtilis (strain 168).